A 313-amino-acid chain; its full sequence is Formimidoylglutamase (313 aa).

Residues His-130, Asp-155, His-157, Asp-159, Asp-241, and Asp-243 each coordinate Mn(2+).

It belongs to the arginase family. Requires Mn(2+) as cofactor.

It catalyses the reaction N-formimidoyl-L-glutamate + H2O = formamide + L-glutamate. The protein operates within amino-acid degradation; L-histidine degradation into L-glutamate; L-glutamate from N-formimidoyl-L-glutamate (hydrolase route): step 1/1. In terms of biological role, catalyzes the conversion of N-formimidoyl-L-glutamate to L-glutamate and formamide. This is Formimidoylglutamase from Salmonella enteritidis PT4 (strain P125109).